The chain runs to 83 residues: MTFKPELATHTLEAEGLRCPEPVMMVRKTIRNMQDGDVLLVKADDPSTTRDIPSFCRFMDHQLVGQATETLPYQYLIRKGLEA.

The active-site Cysteine persulfide intermediate is the Cys19.

This sequence belongs to the sulfur carrier protein TusA family.

It is found in the cytoplasm. Functionally, sulfur carrier protein which probably makes part of a sulfur-relay system. The chain is Sulfur carrier protein TusA from Vibrio atlanticus (strain LGP32) (Vibrio splendidus (strain Mel32)).